The sequence spans 109 residues: Flagellar hook-basal body complex protein FliE (109 aa).

The tract at residues 1 to 38 (MQAIHNDKSLLSPFSELNTDNRTQREESGSTFKEQKGG) is disordered. Basic and acidic residues predominate over residues 22–38 (RTQREESGSTFKEQKGG).

The protein belongs to the FliE family.

Its subcellular location is the bacterial flagellum basal body. The chain is Flagellar hook-basal body complex protein FliE from Helicobacter acinonychis (strain Sheeba).